A 258-amino-acid polypeptide reads, in one-letter code: UPF0328 protein ECU07_0060 (258 aa).

The protein belongs to the UPF0328 family.

This Encephalitozoon cuniculi (strain GB-M1) (Microsporidian parasite) protein is UPF0328 protein ECU07_0060.